The sequence spans 701 residues: Arachidonate 12-lipoxygenase, 12R-type (701 aa).

In terms of domain architecture, PLAT spans Ala2–Lys119. The Lipoxygenase domain maps to Ile120–Ile701. Fe cation-binding residues include His398, His403, His578, Asn582, and Ile701.

The protein belongs to the lipoxygenase family. Fe cation is required as a cofactor. Expressed in skin epidermis and other stratified epithelia including tongue and forestomach. Low levels of expression are found in trachea, brain and lung. Not expressed in intestine, liver, kidney, adipose tissue, muscle or hematopoietic cells.

Its subcellular location is the cytoplasm. It localises to the perinuclear region. The enzyme catalyses 1-O-methyl-(5Z,8Z,11Z,14Z)-eicosatetraenoate + O2 = 1-O-methyl (5Z,8Z,10E,12R,14Z)-hydroperoxyiecosatetraenoate. It catalyses the reaction 1-O-methyl-(5Z,8Z,11Z,14Z)-eicosatetraenoate + O2 = 1-O-methyl-8-hydroperoxy-(5Z,9E,11Z,14Z)-eicosatetraenoate. The catalysed reaction is (5Z,8Z,11Z,14Z)-eicosatetraenoate + O2 = (12R)-hydroperoxy-(5Z,8Z,10E,14Z)-eicosatetraenoate. It carries out the reaction N-[omega-(9Z,12Z)-octadecadienoyloxy]acyl-beta-D-glucosyl-(1&lt;-&gt;1)-octadecasphing-4E-enine + O2 = N-[omega-(9R)-hydroperoxy-(10E,12Z)-octadecadienoyloxy]acyl-beta-D-glucosyl-(1&lt;-&gt;1)-octadecasphing-4E-enine. The enzyme catalyses a N-[omega-(9Z,12Z)-octadecadienoyloxy]-acylsphin-4E-enine + O2 = a N-[omega-(9R)-hydroperoxy-(10E,12Z)-octadecadienoyloxy]-acylsphin-4E-enine. It catalyses the reaction (6Z,9Z,12Z)-octadecatrienoate + O2 = 10-hydroperoxy-(6Z,8E,12Z)-octadecatrienoate. The catalysed reaction is (4Z,7Z,10Z,13Z,16Z,19Z)-docosahexaenoate + O2 = 14-hydroperoxy-(4Z,7Z,10Z,12E,16Z,19Z)-docosahexaenoate. It carries out the reaction (8Z,11Z,14Z)-eicosatrienoate + O2 = (8Z,10E,14Z)-12-hydroperoxyeicosatrienoate. The enzyme catalyses (5Z,8Z,11Z,14Z,17Z)-eicosapentaenoate + O2 = (5Z,7Z,8Z,10E,14Z,17Z)-12-hydroperoxyeicosapentaenoate. It catalyses the reaction (6Z,9Z,12Z)-octadecatrienoate + O2 = 10R-hydroperoxy-(6Z,8E,12Z)-octadecatrienoate. The catalysed reaction is 1-O-methyl-(5Z,8Z,11Z,14Z)-eicosatetraenoate + O2 = 1-O-methyl-(8R)-hydroperoxy-(5Z,9E,11Z,14Z)-eicosatrienoate. It carries out the reaction 1-O-methyl-(9Z,12Z)-octadecadienoate + O2 = 1-O-methyl-(9R)-hydroperoxy-(10E,12Z)-octadecadienoate. The enzyme catalyses 1-O-methyl-20-hydroxy-(5Z,8Z,11Z,14Z)-eicosatetraenoate + O2 = 1-O-methyl-8-hydroperoxy-20-hydroxy-(5Z,9E,11Z,14Z)-eicosatetraenoate. It catalyses the reaction 1-O-methyl-20-hydroxy-(5Z,8Z,11Z,14Z)-eicosatetraenoate + O2 = 1-O-methyl-12-hydroperoxy-20-hydroxy-(5Z,8Z,10E,14Z)-eicosatetraenoate. The catalysed reaction is 1-O-methyl-20-hydroxy-(5Z,8Z,11Z,14Z)-eicosatetraenoate + O2 = 1-O-methyl-9-hydroperoxy-20-hydroxy-(5Z,7E,11Z,14Z)-eicosatetraenoate. It carries out the reaction 1-O-methyl-(9Z,12Z)-octadecadienoate + O2 = 1-O-methyl-(13S)-hydroperoxy-(9Z,11E)-octadecadienoate. Its pathway is lipid metabolism; hydroperoxy eicosatetraenoic acid biosynthesis. The protein operates within lipid metabolism; sphingolipid metabolism. Increased by calcium. Its function is as follows. Catalyzes the regio and stereo-specific incorporation of a single molecule of dioxygen into free and esterified polyunsaturated fatty acids generating lipid hydroperoxides that can be further reduced to the corresponding hydroxy species. Does not convert arachidonic acid to (12R)-hydroperoxyeicosatetraenoic acid/(12R)-HPETE. In the skin, acts upstream of ALOXE3 on the lineolate moiety of esterified omega-hydroxyacyl-sphingosine (EOS) ceramides to produce an epoxy-ketone derivative, a crucial step in the conjugation of omega-hydroxyceramide to membrane proteins. Therefore plays a crucial role in the synthesis of corneocytes lipid envelope and the establishment of the skin barrier to water loss. May also play a role in the regulation of the expression of airway mucins. The protein is Arachidonate 12-lipoxygenase, 12R-type of Mus musculus (Mouse).